A 434-amino-acid chain; its full sequence is D-inositol 3-phosphate glycosyltransferase (434 aa).

His-26 is a 1D-myo-inositol 3-phosphate binding site. UDP-N-acetyl-alpha-D-glucosamine is bound by residues 32–33 (QP) and Gly-40. Residues 37 to 42 (DAGGMN), Lys-95, Tyr-128, Thr-152, and Arg-172 each bind 1D-myo-inositol 3-phosphate. Positions 246 and 251 each coordinate UDP-N-acetyl-alpha-D-glucosamine. Mg(2+) is bound by residues Tyr-321, Arg-322, and Ala-324. 2 residues coordinate UDP-N-acetyl-alpha-D-glucosamine: Glu-334 and Glu-342. Thr-348 is a Mg(2+) binding site.

The protein belongs to the glycosyltransferase group 1 family. MshA subfamily. Homodimer.

It carries out the reaction 1D-myo-inositol 3-phosphate + UDP-N-acetyl-alpha-D-glucosamine = 1D-myo-inositol 2-acetamido-2-deoxy-alpha-D-glucopyranoside 3-phosphate + UDP + H(+). In terms of biological role, catalyzes the transfer of a N-acetyl-glucosamine moiety to 1D-myo-inositol 3-phosphate to produce 1D-myo-inositol 2-acetamido-2-deoxy-glucopyranoside 3-phosphate in the mycothiol biosynthesis pathway. The sequence is that of D-inositol 3-phosphate glycosyltransferase from Thermobifida fusca (strain YX).